Reading from the N-terminus, the 145-residue chain is Ribosomal RNA large subunit methyltransferase H (145 aa).

S-adenosyl-L-methionine is bound by residues Leu-64, Gly-93, and 112–117 (LSALTF).

It belongs to the RNA methyltransferase RlmH family. Homodimer.

It is found in the cytoplasm. The enzyme catalyses pseudouridine(1915) in 23S rRNA + S-adenosyl-L-methionine = N(3)-methylpseudouridine(1915) in 23S rRNA + S-adenosyl-L-homocysteine + H(+). Its function is as follows. Specifically methylates the pseudouridine at position 1915 (m3Psi1915) in 23S rRNA. The protein is Ribosomal RNA large subunit methyltransferase H of Prochlorococcus marinus (strain SARG / CCMP1375 / SS120).